Here is a 101-residue protein sequence, read N- to C-terminus: Apolipoprotein C-II (101 aa).

Positions 1-22 are cleaved as a signal peptide; it reads MGTRYLLVLLLVLLVLGFEVQG. Residues 66-74 form a lipid binding region; sequence TMDEKIRDI. The tract at residues 78 to 101 is lipoprotein lipase cofactor; sequence STAAVSTYAGIFTDQLLSMLKGDS.

It belongs to the apolipoprotein C2 family. Post-translationally, proapolipoprotein C-II is synthesized as a sialic acid containing glycoprotein which is subsequently desialylated prior to its proteolytic processing. In terms of processing, proapolipoprotein C-II, the major form found in plasma undergoes proteolytic cleavage of its N-terminal hexapeptide to generate apolipoprotein C-II, which occurs as the minor form in plasma. As to expression, highly expressed in the liver. Moderately expressed in the ileum, jejunum and ovary.

The protein resides in the secreted. In terms of biological role, component of chylomicrons, very low-density lipoproteins (VLDL), low-density lipoproteins (LDL), and high-density lipoproteins (HDL) in plasma. Plays an important role in lipoprotein metabolism as an activator of lipoprotein lipase. Both proapolipoprotein C-II and apolipoprotein C-II can activate lipoprotein lipase. The protein is Apolipoprotein C-II (APOC2) of Canis lupus familiaris (Dog).